Consider the following 344-residue polypeptide: Protein-glutamate methylesterase/protein-glutamine glutaminase (344 aa).

The Response regulatory domain occupies 7–124 (RVLVVDDSAF…SLTFRQVAPE (118 aa)). Residue aspartate 58 is modified to 4-aspartylphosphate. A CheB-type methylesterase domain is found at 154-344 (PAVSGKIVVI…KIPEKLIELV (191 aa)). Active-site residues include serine 166, histidine 193, and aspartate 289.

This sequence belongs to the CheB family. In terms of processing, phosphorylated by CheA. Phosphorylation of the N-terminal regulatory domain activates the methylesterase activity.

It localises to the cytoplasm. The enzyme catalyses [protein]-L-glutamate 5-O-methyl ester + H2O = L-glutamyl-[protein] + methanol + H(+). It carries out the reaction L-glutaminyl-[protein] + H2O = L-glutamyl-[protein] + NH4(+). Its function is as follows. Involved in chemotaxis. Part of a chemotaxis signal transduction system that modulates chemotaxis in response to various stimuli. Catalyzes the demethylation of specific methylglutamate residues introduced into the chemoreceptors (methyl-accepting chemotaxis proteins or MCP) by CheR. Also mediates the irreversible deamidation of specific glutamine residues to glutamic acid. This Thermotoga maritima (strain ATCC 43589 / DSM 3109 / JCM 10099 / NBRC 100826 / MSB8) protein is Protein-glutamate methylesterase/protein-glutamine glutaminase.